The sequence spans 369 residues: Ferrochelatase (369 aa).

Positions 210 and 291 each coordinate Fe cation.

It belongs to the ferrochelatase family.

It is found in the cytoplasm. The enzyme catalyses heme b + 2 H(+) = protoporphyrin IX + Fe(2+). It functions in the pathway porphyrin-containing compound metabolism; protoheme biosynthesis; protoheme from protoporphyrin-IX: step 1/1. Its function is as follows. Catalyzes the ferrous insertion into protoporphyrin IX. The sequence is that of Ferrochelatase from Thioalkalivibrio sulfidiphilus (strain HL-EbGR7).